The chain runs to 436 residues: Protein TolB homolog (436 aa).

An N-terminal signal peptide occupies residues 1-27 (MRHSIRLTAALLLAFIACFSFPLSAMA).

Belongs to the TolB family.

The protein resides in the periplasm. This Chlorobium luteolum (strain DSM 273 / BCRC 81028 / 2530) (Pelodictyon luteolum) protein is Protein TolB homolog.